The primary structure comprises 299 residues: tRNA dimethylallyltransferase (299 aa).

An ATP-binding site is contributed by 13–20 (GPTASGKT). Substrate is bound at residue 15–20 (TASGKT). Residues 38–41 (DSRQ) are interaction with substrate tRNA.

The protein belongs to the IPP transferase family. Monomer. Requires Mg(2+) as cofactor.

It catalyses the reaction adenosine(37) in tRNA + dimethylallyl diphosphate = N(6)-dimethylallyladenosine(37) in tRNA + diphosphate. Catalyzes the transfer of a dimethylallyl group onto the adenine at position 37 in tRNAs that read codons beginning with uridine, leading to the formation of N6-(dimethylallyl)adenosine (i(6)A). This Prochlorococcus marinus subsp. pastoris (strain CCMP1986 / NIES-2087 / MED4) protein is tRNA dimethylallyltransferase.